A 1616-amino-acid chain; its full sequence is Protein P200 (1616 aa).

Disordered stretches follow at residues methionine 1 to glutamate 41, histidine 878 to phenylalanine 909, glutamine 931 to asparagine 975, aspartate 1004 to aspartate 1083, phenylalanine 1100 to glutamate 1132, and isoleucine 1159 to glutamate 1433. The interval glutamate 891–glutamate 1389 is 2 X 26 AA repeats. Residues glutamate 938–proline 952 show a composition bias toward low complexity. 2 stretches are compositionally biased toward basic and acidic residues: residues glutamine 1012–glutamine 1029 and valine 1059–proline 1081. 2 tandem repeats follow at residues glutamate 1161–glutamate 1186 and glutamate 1205–glutamate 1236. 2 stretches are compositionally biased toward polar residues: residues valine 1200 to glutamine 1227 and glutamate 1242 to histidine 1251. The interval glutamate 1205–glutamate 1389 is 2 X 32 AA repeats. Over residues alanine 1256–tyrosine 1270 the composition is skewed to acidic residues. Residues serine 1276 to glutamate 1285 show a composition bias toward polar residues. A compositionally biased stretch (acidic residues) spans tyrosine 1288–tyrosine 1302. Positions serine 1309–glutamate 1323 are enriched in low complexity. 2 tandem repeats follow at residues glutamate 1310–glutamate 1339 and glutamate 1358–glutamate 1389. The span at valine 1353 to glutamine 1380 shows a compositional bias: polar residues. The segment covering glutamine 1392–proline 1406 has biased composition (low complexity). Residues valine 1416–glutamate 1433 are compositionally biased toward acidic residues.

Functionally, could be an accessory structural component in cytadherence. This chain is Protein P200, found in Mycoplasma genitalium (strain ATCC 33530 / DSM 19775 / NCTC 10195 / G37) (Mycoplasmoides genitalium).